The sequence spans 65 residues: MPKLKTKSAVKKRFSLTGTGKIKVKVAYKSHLLSNKGTKMKRQARGTFILCDADQRIVKKFMPYG.

It belongs to the bacterial ribosomal protein bL35 family.

The sequence is that of Large ribosomal subunit protein bL35 from Rhodospirillum rubrum (strain ATCC 11170 / ATH 1.1.1 / DSM 467 / LMG 4362 / NCIMB 8255 / S1).